Consider the following 195-residue polypeptide: HTH-type transcriptional regulator BetI (195 aa).

An HTH tetR-type domain is found at Glu8 to Leu68. The H-T-H motif DNA-binding region spans Thr31 to Phe50.

It participates in amine and polyamine biosynthesis; betaine biosynthesis via choline pathway [regulation]. In terms of biological role, repressor involved in the biosynthesis of the osmoprotectant glycine betaine. It represses transcription of the choline transporter BetT and the genes of BetAB involved in the synthesis of glycine betaine. In Burkholderia thailandensis (strain ATCC 700388 / DSM 13276 / CCUG 48851 / CIP 106301 / E264), this protein is HTH-type transcriptional regulator BetI.